Here is a 380-residue protein sequence, read N- to C-terminus: Erythronate-4-phosphate dehydrogenase (380 aa).

Substrate contacts are provided by serine 45 and threonine 66. NAD(+) is bound by residues 126 to 127 (QV), aspartate 146, threonine 175, 206 to 208 (ASR), and aspartate 232. Arginine 208 is a catalytic residue. The active site involves glutamate 237. Histidine 254 (proton donor) is an active-site residue. Residue glycine 257 coordinates NAD(+). Tyrosine 258 serves as a coordination point for substrate.

Belongs to the D-isomer specific 2-hydroxyacid dehydrogenase family. PdxB subfamily. Homodimer.

The protein localises to the cytoplasm. The catalysed reaction is 4-phospho-D-erythronate + NAD(+) = (R)-3-hydroxy-2-oxo-4-phosphooxybutanoate + NADH + H(+). It functions in the pathway cofactor biosynthesis; pyridoxine 5'-phosphate biosynthesis; pyridoxine 5'-phosphate from D-erythrose 4-phosphate: step 2/5. Its function is as follows. Catalyzes the oxidation of erythronate-4-phosphate to 3-hydroxy-2-oxo-4-phosphonooxybutanoate. The polypeptide is Erythronate-4-phosphate dehydrogenase (Pseudomonas aeruginosa (strain UCBPP-PA14)).